We begin with the raw amino-acid sequence, 134 residues long: Small ribosomal subunit protein uS8c (134 aa).

The protein belongs to the universal ribosomal protein uS8 family. As to quaternary structure, part of the 30S ribosomal subunit.

Its subcellular location is the plastid. It is found in the chloroplast. One of the primary rRNA binding proteins, it binds directly to 16S rRNA central domain where it helps coordinate assembly of the platform of the 30S subunit. This is Small ribosomal subunit protein uS8c (rps8) from Arabis hirsuta (Hairy rock-cress).